Reading from the N-terminus, the 689-residue chain is Ataxin-1-like (689 aa).

The span at 1-19 shows a compositional bias: basic and acidic residues; sequence MKPVHERSQECLPPKKRDL. Disordered regions lie at residues 1–46, 185–223, and 242–297; these read MKPV…SEWS, ATPPPQAPSPAHSFNKAPSATSPSGQLPHHSSTQPLDLA, and LHET…GEGQ. The segment at 20 to 197 is interaction with NCOR2 and ATXN1; sequence PVTSEDMGRT…PPQAPSPAHS (178 aa). The segment at 20–197 is self-association; it reads PVTSEDMGRT…PPQAPSPAHS (178 aa). Composition is skewed to polar residues over residues 28–43 and 200–219; these read RTTSCSTNHTPSSDAS and KAPSATSPSGQLPHHSSTQP. The segment covering 257–268 has biased composition (low complexity); that stretch reads QESQSALEAAAA. The span at 273–285 shows a compositional bias: basic and acidic residues; sequence RPRERNLVRRESE. S284 bears the Phosphoserine mark. Position 330 is a phosphothreonine (T330). The disordered stretch occupies residues 357 to 405; sequence KEEPSPLNLSHHTPDHQGEGRGSARNPAELAEKSQARGFYPQSHQEPVK. S361 carries the phosphoserine modification. Residues 457–588 enclose the AXH domain; that stretch reads PPPITSSHLP…SISLQSLNSN (132 aa). At S615 the chain carries Phosphoserine. The segment at 617-647 is disordered; it reads ELCDSEGKSQPAGEGSRVVEPSQPESGAQAC.

Belongs to the ATXN1 family. Homodimer. Interacts with CIC. Interacts (via AXH domain) with NCOR2. Interacts with ATXN1. Directly interacts with RBPJ; this interaction is disrupted in the presence of Notch intracellular domain. Competes with ATXN1 for RBPJ-binding. Found in a complex with CIC and ATXN1. In terms of tissue distribution, expressed in cerebellum and cerebral cortex.

Its subcellular location is the nucleus. It localises to the cell projection. The protein resides in the dendrite. Functionally, chromatin-binding factor that repress Notch signaling in the absence of Notch intracellular domain by acting as a CBF1 corepressor. Binds to the HEY promoter and might assist, along with NCOR2, RBPJ-mediated repression. Can suppress ATXN1 cytotoxicity in spinocerebellar ataxia type 1 (SCA1). In concert with CIC and ATXN1, involved in brain development. The protein is Ataxin-1-like (ATXN1L) of Homo sapiens (Human).